Consider the following 411-residue polypeptide: MNVINETANVLKLETGSVTSAKGFSAVGIHTGVKRKRKDLGAIVCEVPASSAAVYTLNKVQAAPLKVTQESIAVEGKLQAMIVNSGIANACTGKRGLDDAYTMRAVGAETFHIPEHYVAVTSTGVIGEFLPMDVITNGIRQLKPEATIEGAHAFNEAILTTDTVEKHTCYQTIVNGKTVTVGGVAKGSGMIHPNMATMLSFVTTDANIDHGHLQGALSAITNETFNRITVDGDTSTNDMVVVMASGLAENEALTPEHPDWANFYKALQLACEDLAKQIARDGEGATKLIEVEVTGAANDQEAGMVAKQIVGSDLVKTAIYGADANWGRIICAIGYSGCEVNQETIDIAIGPIVTLKQSEPTGFSEEEATAYLKEADPVKISVNLHIGNGTGKAWGCDLTYDYVRINAGYRT.

Threonine 160, lysine 186, threonine 197, glutamate 283, asparagine 406, and threonine 411 together coordinate substrate. The Nucleophile role is filled by threonine 197.

Belongs to the ArgJ family. In terms of assembly, heterotetramer of two alpha and two beta chains.

The protein localises to the cytoplasm. The catalysed reaction is N(2)-acetyl-L-ornithine + L-glutamate = N-acetyl-L-glutamate + L-ornithine. The enzyme catalyses L-glutamate + acetyl-CoA = N-acetyl-L-glutamate + CoA + H(+). It participates in amino-acid biosynthesis; L-arginine biosynthesis; L-ornithine and N-acetyl-L-glutamate from L-glutamate and N(2)-acetyl-L-ornithine (cyclic): step 1/1. Its pathway is amino-acid biosynthesis; L-arginine biosynthesis; N(2)-acetyl-L-ornithine from L-glutamate: step 1/4. Its activity is regulated as follows. Feedback inhibition by L-ornithine. Its function is as follows. Catalyzes two activities which are involved in the cyclic version of arginine biosynthesis: the synthesis of N-acetylglutamate from glutamate and acetyl-CoA as the acetyl donor, and of ornithine by transacetylation between N(2)-acetylornithine and glutamate. The protein is Arginine biosynthesis bifunctional protein ArgJ of Halalkalibacterium halodurans (strain ATCC BAA-125 / DSM 18197 / FERM 7344 / JCM 9153 / C-125) (Bacillus halodurans).